The sequence spans 537 residues: uncharacterized protein (537 aa).

The first 15 residues, 1–15, serve as a signal peptide directing secretion; that stretch reads MALFQLFSFLNVTLG. A run of 2 helical transmembrane segments spans residues 459-479 and 490-510; these read VLFS…GCCF and VILL…LGFT.

The protein resides in the host membrane. This is an uncharacterized protein from Citrus sinensis (Sweet orange).